A 200-amino-acid chain; its full sequence is Lipid A acyltransferase PagP (200 aa).

A signal peptide spans 1-24 (MRLKLTSHTCLFALSSLLVTPAFA). Catalysis depends on residues His-72, Asp-115, and Ser-116.

Belongs to the lipid A palmitoyltransferase family. In terms of assembly, homodimer.

Its subcellular location is the cell outer membrane. It catalyses the reaction a lipid A + a 1,2-diacyl-sn-glycero-3-phosphocholine = a hepta-acyl lipid A + a 2-acyl-sn-glycero-3-phosphocholine. The enzyme catalyses a lipid IVA + a 1,2-diacyl-sn-glycero-3-phosphocholine = a lipid IVB + a 2-acyl-sn-glycero-3-phosphocholine. The catalysed reaction is a lipid IIA + a 1,2-diacyl-sn-glycero-3-phosphocholine = a lipid IIB + a 2-acyl-sn-glycero-3-phosphocholine. Functionally, transfers a fatty acid residue from the sn-1 position of a phospholipid to the N-linked hydroxyfatty acid chain on the proximal unit of lipid A or its precursors. The sequence is that of Lipid A acyltransferase PagP from Dickeya dadantii (strain 3937) (Erwinia chrysanthemi (strain 3937)).